Here is a 208-residue protein sequence, read N- to C-terminus: Uracil phosphoribosyltransferase (208 aa).

5-phospho-alpha-D-ribose 1-diphosphate contacts are provided by residues arginine 78, arginine 103, and 130 to 138; that span reads DPMLAIGGS. Residues isoleucine 193 and 198 to 200 contribute to the uracil site; that span reads GDA. Aspartate 199 contacts 5-phospho-alpha-D-ribose 1-diphosphate.

The protein belongs to the UPRTase family. The cofactor is Mg(2+).

The enzyme catalyses UMP + diphosphate = 5-phospho-alpha-D-ribose 1-diphosphate + uracil. It participates in pyrimidine metabolism; UMP biosynthesis via salvage pathway; UMP from uracil: step 1/1. Allosterically activated by GTP. Catalyzes the conversion of uracil and 5-phospho-alpha-D-ribose 1-diphosphate (PRPP) to UMP and diphosphate. The sequence is that of Uracil phosphoribosyltransferase from Vibrio cholerae serotype O1 (strain ATCC 39315 / El Tor Inaba N16961).